A 417-amino-acid polypeptide reads, in one-letter code: Histidine--tRNA ligase (417 aa).

Belongs to the class-II aminoacyl-tRNA synthetase family. In terms of assembly, homodimer.

Its subcellular location is the cytoplasm. The catalysed reaction is tRNA(His) + L-histidine + ATP = L-histidyl-tRNA(His) + AMP + diphosphate + H(+). The polypeptide is Histidine--tRNA ligase (Caldanaerobacter subterraneus subsp. tengcongensis (strain DSM 15242 / JCM 11007 / NBRC 100824 / MB4) (Thermoanaerobacter tengcongensis)).